A 120-amino-acid chain; its full sequence is Small ribosomal subunit protein uS13 (120 aa).

A disordered region spans residues 92 to 120; that stretch reads HRKGLPVRGQTTKNNARTRKGKKKTVGSK. A compositionally biased stretch (basic residues) spans 107–120; the sequence is ARTRKGKKKTVGSK.

It belongs to the universal ribosomal protein uS13 family. Part of the 30S ribosomal subunit. Forms a loose heterodimer with protein S19. Forms two bridges to the 50S subunit in the 70S ribosome.

Located at the top of the head of the 30S subunit, it contacts several helices of the 16S rRNA. In the 70S ribosome it contacts the 23S rRNA (bridge B1a) and protein L5 of the 50S subunit (bridge B1b), connecting the 2 subunits; these bridges are implicated in subunit movement. Contacts the tRNAs in the A and P-sites. The protein is Small ribosomal subunit protein uS13 of Helicobacter pylori (strain J99 / ATCC 700824) (Campylobacter pylori J99).